The primary structure comprises 492 residues: MGSCLSAESRSPRPGSPCSPAFSVRKRKNSKKRPGSRNSSFDYRREEPLNQVPGRMFLNGSTEVACIYTQQGKKGPNQDAMVVWENFGSRTDTIFCGVFDGHGPYGHMVAKRVRDNLPLKLSAYWEAKVPVEGVLKAITTDTVNNVTNINNPEDAAAAAAFVTAEEEPRTSADMEEENTETQPELFQTLKESFLKAFKVMDRELKFHGSVDCFCSGTTAVTLIKQGQYLVVGNVGDSRAVMGTRDSENTLVAVQLTVDLKPNLPAEAERIRKCRGRVFALRDEPEVCRVWLPNCDSPGLAMARAFGDFCLKDFGLISVPDVSFRQLTEKDEFIVLATDGIWDVLSNEDVVAIVASAPSRSSAARALVESAVRAWRYKYPTSKVDDCAAVCLYLDSSNTNAISTASSISKLEDGEEEELKATTEDDDASGPSGLGRSSTVRSGKEIALDESETEKLIKEADNLDSEPGTEYSALEGVARVNTLLNLPRFVPGK.

The disordered stretch occupies residues 1–46; that stretch reads MGSCLSAESRSPRPGSPCSPAFSVRKRKNSKKRPGSRNSSFDYRRE. Residues 24–35 show a composition bias toward basic residues; sequence VRKRKNSKKRPG. One can recognise a PPM-type phosphatase domain in the interval 64-393; the sequence is VACIYTQQGK…DDCAAVCLYL (330 aa). Mn(2+) contacts are provided by Asp100, Gly101, Asp338, and Asp384. The segment at 406–468 is disordered; that stretch reads SISKLEDGEE…ADNLDSEPGT (63 aa). A compositionally biased stretch (acidic residues) spans 412-427; sequence DGEEEELKATTEDDDA. Positions 441-460 are enriched in basic and acidic residues; the sequence is SGKEIALDESETEKLIKEAD.

The protein belongs to the PP2C family. Requires Mg(2+) as cofactor. The cofactor is Mn(2+).

The enzyme catalyses O-phospho-L-seryl-[protein] + H2O = L-seryl-[protein] + phosphate. The catalysed reaction is O-phospho-L-threonyl-[protein] + H2O = L-threonyl-[protein] + phosphate. This chain is Probable protein phosphatase 2C 33 (PPC6-1), found in Arabidopsis thaliana (Mouse-ear cress).